The sequence spans 214 residues: Protein-L-isoaspartate O-methyltransferase 1 (214 aa).

Residue Ser62 is part of the active site.

Belongs to the methyltransferase superfamily. L-isoaspartyl/D-aspartyl protein methyltransferase family.

Its subcellular location is the cytoplasm. The enzyme catalyses [protein]-L-isoaspartate + S-adenosyl-L-methionine = [protein]-L-isoaspartate alpha-methyl ester + S-adenosyl-L-homocysteine. Its function is as follows. Catalyzes the methyl esterification of L-isoaspartyl residues in peptides and proteins that result from spontaneous decomposition of normal L-aspartyl and L-asparaginyl residues. It plays a role in the repair and/or degradation of damaged proteins. The protein is Protein-L-isoaspartate O-methyltransferase 1 of Syntrophobacter fumaroxidans (strain DSM 10017 / MPOB).